The sequence spans 199 residues: Nucleoid occlusion factor SlmA (199 aa).

The 61-residue stretch at 11 to 71 (ERRQQVLTVL…ALIDNLEAHL (61 aa)) folds into the HTH tetR-type domain. The H-T-H motif DNA-binding region spans 34–53 (TTARIAAEVGVSEAALYRYY).

It belongs to the nucleoid occlusion factor SlmA family. As to quaternary structure, homodimer. Interacts with FtsZ.

The protein localises to the cytoplasm. It localises to the nucleoid. Functionally, required for nucleoid occlusion (NO) phenomenon, which prevents Z-ring formation and cell division over the nucleoid. Acts as a DNA-associated cell division inhibitor that binds simultaneously chromosomal DNA and FtsZ, and disrupts the assembly of FtsZ polymers. SlmA-DNA-binding sequences (SBS) are dispersed on non-Ter regions of the chromosome, preventing FtsZ polymerization at these regions. This chain is Nucleoid occlusion factor SlmA, found in Pasteurella multocida (strain Pm70).